The primary structure comprises 601 residues: Casbene synthase, chloroplastic (601 aa).

Residues 1-56 constitute a chloroplast transit peptide; that stretch reads MALPSAAMQSNPEKLNLFHRLSSLPTTSLEYGNNRFPFFSSSAKSHFKKPTQACLS. Residues D355, D359, N499, S503, and E507 each coordinate Mg(2+). The DDXXD motif motif lies at 355-359; sequence DDTID.

This sequence belongs to the terpene synthase family. Mg(2+) is required as a cofactor.

The protein localises to the plastid. The protein resides in the chloroplast. It catalyses the reaction (2E,6E,10E)-geranylgeranyl diphosphate = casbene + diphosphate. Functionally, catalyzes the cyclization of geranylgeranyl diphosphate to casbene, a diterpene phytoalexin with antibacterial and antifungal activity. This Ricinus communis (Castor bean) protein is Casbene synthase, chloroplastic.